The primary structure comprises 138 residues: MSDEERTLVLLKPDAVKRRLMGEIIGRYEAKGLTVRAMELSTIDTKIARKHYAEHVGRDYYAALEEFITSGPLVAMVLEGRRAISVVRAMNGTTDCAEALPGTIRGDFGTEKNHNLVHASDCLESAEREIGLWFPHLV.

Positions 12, 60, 88, 94, 105, and 115 each coordinate ATP. Histidine 118 acts as the Pros-phosphohistidine intermediate in catalysis.

Belongs to the NDK family. In terms of assembly, homotetramer. Mg(2+) is required as a cofactor.

The protein resides in the cytoplasm. The enzyme catalyses a 2'-deoxyribonucleoside 5'-diphosphate + ATP = a 2'-deoxyribonucleoside 5'-triphosphate + ADP. The catalysed reaction is a ribonucleoside 5'-diphosphate + ATP = a ribonucleoside 5'-triphosphate + ADP. Its function is as follows. Major role in the synthesis of nucleoside triphosphates other than ATP. The ATP gamma phosphate is transferred to the NDP beta phosphate via a ping-pong mechanism, using a phosphorylated active-site intermediate. The protein is Nucleoside diphosphate kinase of Cutibacterium acnes (strain DSM 16379 / KPA171202) (Propionibacterium acnes).